The sequence spans 284 residues: Protein-S-isoprenylcysteine O-methyltransferase (284 aa).

Residues 1–16 (MAGCAARAPPGSEARL) lie on the Cytoplasmic side of the membrane. A helical membrane pass occupies residues 17-33 (SLATFLLGASVLALPLL). Residues 34 to 41 (TRAGLQGR) are Lumenal-facing. A helical membrane pass occupies residues 42–59 (TGLALYVAGLNALLLLLY). Residues 60–69 (RPPRYQIAIR) lie on the Cytoplasmic side of the membrane. Residues 70–87 (ACFLGFVFGCGTLLSFSQ) traverse the membrane as a helical segment. At 88–92 (SSWSH) the chain is on the lumenal side. The helical transmembrane segment at 93-112 (FGWYMCSLSLFHYSEYLVTA) threads the bilayer. Topologically, residues 113–131 (VNNPKSLSLDSFLLNHSLE) are cytoplasmic. A helical membrane pass occupies residues 132 to 149 (YTVAALSSWLEFTLENIF). Residues 150-154 (WPELK) are Lumenal-facing. Residues 155–174 (QITWLSVTGLLMVVFGECLR) form a helical membrane-spanning segment. Residues 175–212 (KAAMFTAGSNFNHVVQNEKSDTHTLVTSGVYAWFRHPS) lie on the Cytoplasmic side of the membrane. Residues Gln190, 197-200 (HTLV), Tyr205, and 210-213 (HPSY) each bind S-adenosyl-L-methionine. A helical membrane pass occupies residues 213-228 (YVGWFYWSIGTQVMLC). A topological domain (lumenal) is located at residue Asn229. Residues 230–244 (PICGVSYALTVWRFF) traverse the membrane as a helical segment. Residues 245–284 (RDRTEEEEISLIHFFGEEYLEYKKRVPTGLPFIKGVKVDL) are Cytoplasmic-facing. Residue Arg247 coordinates substrate. Glu251 contributes to the S-adenosyl-L-methionine binding site.

Belongs to the class VI-like SAM-binding methyltransferase superfamily. Isoprenylcysteine carboxyl methyltransferase family. As to expression, ubiquitously expressed. Expressed at higher levels in the cerebellum and putamen than in other brain regions. Abundant expression seen in the Purkinje cells and pontine neurons.

It is found in the endoplasmic reticulum membrane. The catalysed reaction is [protein]-C-terminal S-[(2E,6E)-farnesyl]-L-cysteine + S-adenosyl-L-methionine = [protein]-C-terminal S-[(2E,6E)-farnesyl]-L-cysteine methyl ester + S-adenosyl-L-homocysteine. Its activity is regulated as follows. Competitively inhibited by N-acetyl-S-trans,trans-farnesyl-l-cysteine (AFC). Catalyzes the post-translational methylation of isoprenylated C-terminal cysteine residues. The sequence is that of Protein-S-isoprenylcysteine O-methyltransferase (ICMT) from Homo sapiens (Human).